The chain runs to 639 residues: Immunoglobulin-like domain-containing receptor 2 (639 aa).

The signal sequence occupies residues 1–20 (MDRVLLRWISLFWLTAMVEG). An Ig-like V-type domain is found at 21–162 (LQVTVPDKKK…LEGKNEDSVE (142 aa)). Topologically, residues 21-186 (LQVTVPDKKK…PSFAVEIMPE (166 aa)) are lumenal. A disulfide bond links Cys42 and Cys145. A helical membrane pass occupies residues 187-207 (WVFVGLVLLGVFLFFVLVGIC). Topologically, residues 208–639 (WCQCCPHSCC…DFPTRMSLVV (432 aa)) are cytoplasmic. 3 disordered regions span residues 273-295 (LMDKPHPPPLAPSDSTGGSHSVR), 374-415 (WSGV…MLSR), and 437-639 (YGQR…SLVV). 2 stretches are compositionally biased toward basic and acidic residues: residues 393–414 (YNKEDRESFRHSQPRSKSEMLS) and 442–464 (RRADGNSHEARGGSRFERSESRA). Ser473 is subject to Phosphoserine. The segment covering 483–493 (RSREPLTDADR) has biased composition (basic and acidic residues). Residue Arg544 is modified to Omega-N-methylarginine. A Phosphoserine modification is found at Ser579. A compositionally biased stretch (basic and acidic residues) spans 606-617 (RGRDLPYHSNSE).

Belongs to the immunoglobulin superfamily. LISCH7 family. As to quaternary structure, interacts with MARVELD2 and OCLN. Interacts with P4HB AND HSPA5; the interaction with HSPA5 stabilizes ILDR2 expression. Interacts (via C-terminus) with TRA2A, TRA2B and SRSF1. Expressed in testis, brain, pituitary, colon, heart, nerves, prostate, esophagus, lung liver and small intestine. Highly expressed in macrophages, also expressed in monocytes and at low levels in NK and NKT cells (at protein level).

It localises to the endoplasmic reticulum membrane. The protein localises to the cell junction. The protein resides in the tight junction. It is found in the nucleus. Functionally, may be involved in ER stress pathways with effects on lipid homeostasis and insulin secretion. With ILDR1 and LSR, involved in the maintain of the epithelial barrier function through the recruitment of MARVELD2/tricellulin to tricellular tight junctions. Also functions as a B7-like protein family member expressed on immune cells and inflamed tissue and with T-cell inhibitory activity. In the inner ear, may regulate alternative pre-mRNA splicing via binding to TRA2A, TRA2B and SRSF1. The polypeptide is Immunoglobulin-like domain-containing receptor 2 (Homo sapiens (Human)).